The primary structure comprises 171 residues: Large ribosomal subunit protein bL9 (171 aa).

Belongs to the bacterial ribosomal protein bL9 family.

Binds to the 23S rRNA. The polypeptide is Large ribosomal subunit protein bL9 (Rickettsia africae (strain ESF-5)).